A 129-amino-acid polypeptide reads, in one-letter code: M-zodatoxin-Lt8e (129 aa).

The signal sequence occupies residues 1 to 20 (MKYFVVALALVAAFVCIAES). A propeptide spanning residues 21 to 60 (KPAESEHELAEVEEENELADLEDAVWLEHLADLSDLEEAR) is cleaved from the precursor. A Processing quadruplet motif motif is present at residues 57–60 (EEAR).

Cleavage of the propeptide depends on the processing quadruplet motif (XXXR, with at least one of X being E). Expressed by the venom gland.

It localises to the secreted. Its function is as follows. Insecticidal, cytolytic and antimicrobial peptide. Forms voltage-dependent, ion-permeable channels in membranes. At high concentration causes cell membrane lysis. In Lachesana tarabaevi (Spider), this protein is M-zodatoxin-Lt8e (cit 1-5).